The chain runs to 523 residues: Peptide chain release factor 3 (523 aa).

Residues 10-277 form the tr-type G domain; it reads EKRRTFAIIS…SFVDLAPAPE (268 aa). GTP contacts are provided by residues 19–26, 87–91, and 141–144; these read SHPDAGKT, DTPGH, and NKLD.

Belongs to the TRAFAC class translation factor GTPase superfamily. Classic translation factor GTPase family. PrfC subfamily.

Its subcellular location is the cytoplasm. Increases the formation of ribosomal termination complexes and stimulates activities of RF-1 and RF-2. It binds guanine nucleotides and has strong preference for UGA stop codons. It may interact directly with the ribosome. The stimulation of RF-1 and RF-2 is significantly reduced by GTP and GDP, but not by GMP. The chain is Peptide chain release factor 3 from Lactobacillus acidophilus (strain ATCC 700396 / NCK56 / N2 / NCFM).